Here is a 261-residue protein sequence, read N- to C-terminus: Undecaprenyl-diphosphatase (261 aa).

8 consecutive transmembrane segments (helical) span residues 16 to 36 (TEFLPVSSSAHLVLVPWLFGF), 40 to 60 (GLVFDVALHLGTLVAVLVYFW), 82 to 102 (FWFLVVATIPGVVVGYFLEDI), 107 to 127 (LRAPLLIGVLLIMMGGVLYLA), 140 to 160 (IRFGDAMAIGLSQALAIIPGV), 183 to 203 (FSFLLSTPIIFGAGLMQMLKM), 211 to 231 (SFVLGVFTSAVVGFLAIWFLI), and 239 to 259 (FNIFVIYRVLLGLTVIVIALL).

Belongs to the UppP family.

It is found in the cell membrane. The catalysed reaction is di-trans,octa-cis-undecaprenyl diphosphate + H2O = di-trans,octa-cis-undecaprenyl phosphate + phosphate + H(+). Its function is as follows. Catalyzes the dephosphorylation of undecaprenyl diphosphate (UPP). Confers resistance to bacitracin. In Desulforudis audaxviator (strain MP104C), this protein is Undecaprenyl-diphosphatase.